Reading from the N-terminus, the 765-residue chain is Dipeptidyl peptidase 4 (765 aa).

Topologically, residues 1–6 (MKTPWK) are cytoplasmic. Residues 7–29 (VLLGLLAIAALVTVITVPVVLLT) form a helical; Signal-anchor for type II membrane protein membrane-spanning segment. The Extracellular segment spans residues 30–765 (KGNDASTDSR…HFLKQCFSLL (736 aa)). N84, N91, N149, N218, N228, N271, N280, N320, and N392 each carry an N-linked (GlcNAc...) asparagine glycan. 3 cysteine pairs are disulfide-bonded: C384–C393, C443–C446, and C453–C471. N-linked (GlcNAc...) asparagine glycosylation is present at N495. The active-site Charge relay system is S629. C648 and C761 form a disulfide bridge. An N-linked (GlcNAc...) asparagine glycan is attached at N684. Residues D707 and H739 each act as charge relay system in the active site.

It belongs to the peptidase S9B family. DPPIV subfamily. In terms of assembly, monomer. Homodimer. Heterodimer with Seprase (FAP). Requires homodimerization for optimal dipeptidyl peptidase activity and T-cell costimulation. Found in a membrane raft complex, at least composed of BCL10, CARD11, DPP4 and IKBKB. Associates with collagen. Interacts with PTPRC; the interaction is enhanced in an interleukin-12-dependent manner in activated lymphocytes. Interacts (via extracellular domain) with ADA; does not inhibit its dipeptidyl peptidase activity. Interacts with CAV1 (via the N-terminus); the interaction is direct. Interacts (via cytoplasmic tail) with CARD11 (via PDZ domain); its homodimerization is necessary for interaction with CARD11. Interacts with IGF2R; the interaction is direct. Interacts with GPC3. The soluble form (Dipeptidyl peptidase 4 soluble form also named SDPP) derives from the membrane form (Dipeptidyl peptidase 4 membrane form also named MDPP) by proteolytic processing. Post-translationally, N- and O-Glycosylated. In terms of processing, phosphorylated. Mannose 6-phosphate residues in the carbohydrate moiety are necessary for interaction with IGF2R in activated T-cells. Mannose 6-phosphorylation is induced during T-cell activation. As to expression, intestinal epithelium, dendritic cells and several immune system tissues.

It is found in the secreted. It localises to the cell membrane. The protein localises to the apical cell membrane. The protein resides in the cell projection. Its subcellular location is the invadopodium membrane. It is found in the lamellipodium membrane. It localises to the cell junction. The protein localises to the membrane raft. The enzyme catalyses Release of an N-terminal dipeptide, Xaa-Yaa-|-Zaa-, from a polypeptide, preferentially when Yaa is Pro, provided Zaa is neither Pro nor hydroxyproline.. With respect to regulation, inhibited by GPC3 and diprotin A. Its function is as follows. Cell surface glycoprotein receptor involved in the costimulatory signal essential for T-cell receptor (TCR)-mediated T-cell activation. Acts as a positive regulator of T-cell coactivation, by binding at least ADA, CAV1, IGF2R, and PTPRC. Its binding to CAV1 and CARD11 induces T-cell proliferation and NF-kappa-B activation in a T-cell receptor/CD3-dependent manner. Its interaction with ADA also regulates lymphocyte-epithelial cell adhesion. In association with FAP is involved in the pericellular proteolysis of the extracellular matrix (ECM), the migration and invasion of endothelial cells into the ECM. May be involved in the promotion of lymphatic endothelial cells adhesion, migration and tube formation. When overexpressed, enhanced cell proliferation, a process inhibited by GPC3. Also acts as a serine exopeptidase with a dipeptidyl peptidase activity that regulates various physiological processes by cleaving peptides in the circulation, including many chemokines, mitogenic growth factors, neuropeptides and peptide hormones. Removes N-terminal dipeptides sequentially from polypeptides having unsubstituted N-termini provided that the penultimate residue is proline. The polypeptide is Dipeptidyl peptidase 4 (DPP4) (Bos taurus (Bovine)).